The primary structure comprises 193 residues: Corrinoid adenosyltransferase (193 aa).

ATP is bound by residues 5–13, Lys22, 130–135, and Asn154; these read TKTGDKGQT and RRAERR.

This sequence belongs to the Cob(I)alamin adenosyltransferase family. In terms of assembly, homotrimer.

The protein resides in the cytoplasm. The catalysed reaction is 2 cob(II)yrinate a,c diamide + reduced [electron-transfer flavoprotein] + 2 ATP = 2 adenosylcob(III)yrinate a,c-diamide + 2 triphosphate + oxidized [electron-transfer flavoprotein] + 3 H(+). It catalyses the reaction 2 cob(II)alamin + reduced [electron-transfer flavoprotein] + 2 ATP = 2 adenosylcob(III)alamin + 2 triphosphate + oxidized [electron-transfer flavoprotein] + 3 H(+). Its pathway is cofactor biosynthesis; adenosylcobalamin biosynthesis; adenosylcobalamin from cob(II)yrinate a,c-diamide: step 2/7. The chain is Corrinoid adenosyltransferase (yvqK) from Bacillus subtilis (strain 168).